Consider the following 287-residue polypeptide: Bifunctional protein FolD (287 aa).

Residues 166-168 (GAS) and Ile-232 each bind NADP(+).

Belongs to the tetrahydrofolate dehydrogenase/cyclohydrolase family. In terms of assembly, homodimer.

The catalysed reaction is (6R)-5,10-methylene-5,6,7,8-tetrahydrofolate + NADP(+) = (6R)-5,10-methenyltetrahydrofolate + NADPH. It carries out the reaction (6R)-5,10-methenyltetrahydrofolate + H2O = (6R)-10-formyltetrahydrofolate + H(+). It participates in one-carbon metabolism; tetrahydrofolate interconversion. Its function is as follows. Catalyzes the oxidation of 5,10-methylenetetrahydrofolate to 5,10-methenyltetrahydrofolate and then the hydrolysis of 5,10-methenyltetrahydrofolate to 10-formyltetrahydrofolate. This is Bifunctional protein FolD from Pectobacterium atrosepticum (strain SCRI 1043 / ATCC BAA-672) (Erwinia carotovora subsp. atroseptica).